The primary structure comprises 57 residues: UPF0391 membrane protein NE0130 (57 aa).

2 consecutive transmembrane segments (helical) span residues Met-1–Arg-21 and Phe-33–Ile-53.

It belongs to the UPF0391 family.

It is found in the cell membrane. This chain is UPF0391 membrane protein NE0130, found in Nitrosomonas europaea (strain ATCC 19718 / CIP 103999 / KCTC 2705 / NBRC 14298).